The chain runs to 772 residues: 5-methyltetrahydropteroyltriglutamate--homocysteine methyltransferase (772 aa).

5-methyltetrahydropteroyltri-L-glutamate-binding positions include 24–27 (RELK) and Lys120. Residues 446–448 (IGS) and Glu499 contribute to the L-homocysteine site. Residues 446–448 (IGS) and Glu499 each bind L-methionine. Trp576 serves as a coordination point for 5-methyltetrahydropteroyltri-L-glutamate. Residue Asp614 coordinates L-homocysteine. Residue Asp614 participates in L-methionine binding. Glu620 provides a ligand contact to 5-methyltetrahydropteroyltri-L-glutamate. Zn(2+) is bound by residues His656, Cys658, and Glu680. His709 acts as the Proton donor in catalysis. Cys741 contacts Zn(2+).

This sequence belongs to the vitamin-B12 independent methionine synthase family. Zn(2+) serves as cofactor.

It catalyses the reaction 5-methyltetrahydropteroyltri-L-glutamate + L-homocysteine = tetrahydropteroyltri-L-glutamate + L-methionine. It functions in the pathway amino-acid biosynthesis; L-methionine biosynthesis via de novo pathway; L-methionine from L-homocysteine (MetE route): step 1/1. Catalyzes the transfer of a methyl group from 5-methyltetrahydrofolate to homocysteine resulting in methionine formation. This chain is 5-methyltetrahydropteroyltriglutamate--homocysteine methyltransferase, found in Streptomyces coelicolor (strain ATCC BAA-471 / A3(2) / M145).